Reading from the N-terminus, the 371-residue chain is Zinc finger CCCH domain-containing protein 21 (371 aa).

Positions 1–64 (MPPKQQPKAD…AAKKKKEEEK (64 aa)) are disordered. Over residues 10–23 (DLAKKQKQVEDKTF) the composition is skewed to basic and acidic residues. Over residues 34–46 (VQKYVQSLKQSVQ) the composition is skewed to polar residues. 2 C3H1-type zinc fingers span residues 88–115 (DPKS…HDLN) and 159–197 (KPTD…HALP). Coiled coils occupy residues 205–237 (QMKA…ATQM) and 283–317 (FVDD…GTSK). Residues 290–371 (CEEYEREREQ…IREPNDEGSS (82 aa)) form a disordered region. Basic and acidic residues predominate over residues 292-312 (EYEREREQEETEQKAKNKEAE). Positions 330 to 352 (NEEEEDDDDDDDDLDMDELDELE) are enriched in acidic residues.

The protein is Zinc finger CCCH domain-containing protein 21 of Arabidopsis thaliana (Mouse-ear cress).